The chain runs to 295 residues: Small ribosomal subunit biogenesis GTPase RsgA (295 aa).

Residues 68–228 enclose the CP-type G domain; the sequence is KNLLTKPHVA…VVDTPGFANL (161 aa). Residues 117-120 and 170-178 each bind GTP; these read NKMD and GLSGVGKSS. Zn(2+)-binding residues include Cys-250, Cys-255, His-257, and Cys-263.

This sequence belongs to the TRAFAC class YlqF/YawG GTPase family. RsgA subfamily. Monomer. Associates with 30S ribosomal subunit, binds 16S rRNA. Zn(2+) serves as cofactor.

The protein resides in the cytoplasm. In terms of biological role, one of several proteins that assist in the late maturation steps of the functional core of the 30S ribosomal subunit. Helps release RbfA from mature subunits. May play a role in the assembly of ribosomal proteins into the subunit. Circularly permuted GTPase that catalyzes slow GTP hydrolysis, GTPase activity is stimulated by the 30S ribosomal subunit. This chain is Small ribosomal subunit biogenesis GTPase RsgA, found in Thermotoga petrophila (strain ATCC BAA-488 / DSM 13995 / JCM 10881 / RKU-1).